Here is a 342-residue protein sequence, read N- to C-terminus: MTTFLAKNWSSLIKPTKVQYEAVDNNPNIKTMVVEPLERGLGLTLGNSLRRVLLSSLRGAAITSIKIPGVEHELSPVSGVKEDLTDIILNIRDVIVKMDSVQKCNLRLEVTGPAVVTAGMITVTDKQDVTILNPQHVICNLSKGFNLEMDLICEQGKGYVPTSCLHNSDSPIGAIHLDALFNPVRRVSYKVENSMVGQMTNYDKLIITVETNGVVNPDAALGLAARILLDQLQVFINFQEVEEEKPEKLELQTINPVLLKKVYELELSVRSQNCLKNENIVYVGDLVARTETQMLKTANFGRKSLNELKKVLANFNLEFGMKDIGWPPDNLESLAKKHEDQY.

The alpha N-terminal domain (alpha-NTD) stretch occupies residues 1 to 239 (MTTFLAKNWS…DQLQVFINFQ (239 aa)). The alpha C-terminal domain (alpha-CTD) stretch occupies residues 254–342 (INPVLLKKVY…SLAKKHEDQY (89 aa)).

This sequence belongs to the RNA polymerase alpha chain family. As to quaternary structure, homodimer. The RNAP catalytic core consists of 2 alpha, 1 beta, 1 beta' and 1 omega subunit. When a sigma factor is associated with the core the holoenzyme is formed, which can initiate transcription.

The enzyme catalyses RNA(n) + a ribonucleoside 5'-triphosphate = RNA(n+1) + diphosphate. Its function is as follows. DNA-dependent RNA polymerase catalyzes the transcription of DNA into RNA using the four ribonucleoside triphosphates as substrates. This is DNA-directed RNA polymerase subunit alpha from Orientia tsutsugamushi (strain Boryong) (Rickettsia tsutsugamushi).